We begin with the raw amino-acid sequence, 240 residues long: Probable hydroxyacylglutathione hydrolase (240 aa).

Zn(2+)-binding residues include histidine 33, histidine 35, aspartate 37, histidine 38, histidine 95, and aspartate 119. Residues arginine 128, 158 to 160 (HEY), and 234 to 237 (REEK) each bind substrate. Histidine 158 is a Zn(2+) binding site.

This sequence belongs to the metallo-beta-lactamase superfamily. Glyoxalase II family. Zn(2+) is required as a cofactor.

It catalyses the reaction an S-(2-hydroxyacyl)glutathione + H2O = a 2-hydroxy carboxylate + glutathione + H(+). It participates in secondary metabolite metabolism; methylglyoxal degradation; (R)-lactate from methylglyoxal: step 2/2. Functionally, thiolesterase that catalyzes the hydrolysis of S-D-lactoyl-glutathione to form glutathione and D-lactic acid. In Schistosoma mansoni (Blood fluke), this protein is Probable hydroxyacylglutathione hydrolase.